We begin with the raw amino-acid sequence, 598 residues long: Elongation factor 4 (598 aa).

In terms of domain architecture, tr-type G spans 2–184 (QHIRNFSIIA…AIVARVPAPK (183 aa)). GTP contacts are provided by residues 14–19 (DHGKST) and 131–134 (NKID).

The protein belongs to the TRAFAC class translation factor GTPase superfamily. Classic translation factor GTPase family. LepA subfamily.

It is found in the cell inner membrane. The catalysed reaction is GTP + H2O = GDP + phosphate + H(+). Its function is as follows. Required for accurate and efficient protein synthesis under certain stress conditions. May act as a fidelity factor of the translation reaction, by catalyzing a one-codon backward translocation of tRNAs on improperly translocated ribosomes. Back-translocation proceeds from a post-translocation (POST) complex to a pre-translocation (PRE) complex, thus giving elongation factor G a second chance to translocate the tRNAs correctly. Binds to ribosomes in a GTP-dependent manner. The protein is Elongation factor 4 of Azoarcus sp. (strain BH72).